The sequence spans 24 residues: Brevinin-1Ra (24 aa).

Cysteines 18 and 24 form a disulfide.

As to expression, expressed by the skin glands.

The protein localises to the secreted. Functionally, antimicrobial peptide. This is Brevinin-1Ra from Pelophylax ridibundus (Marsh frog).